The sequence spans 424 residues: Dihydroorotase (424 aa).

Zn(2+)-binding residues include histidine 61 and histidine 63. Substrate is bound by residues 63–65 and asparagine 95; that span reads HLR. Aspartate 153, histidine 180, and histidine 233 together coordinate Zn(2+). Asparagine 279 is a binding site for substrate. Aspartate 306 contributes to the Zn(2+) binding site. Aspartate 306 is an active-site residue. Histidine 310 is a substrate binding site.

This sequence belongs to the metallo-dependent hydrolases superfamily. DHOase family. Class I DHOase subfamily. Zn(2+) serves as cofactor.

The enzyme catalyses (S)-dihydroorotate + H2O = N-carbamoyl-L-aspartate + H(+). It participates in pyrimidine metabolism; UMP biosynthesis via de novo pathway; (S)-dihydroorotate from bicarbonate: step 3/3. Catalyzes the reversible cyclization of carbamoyl aspartate to dihydroorotate. The protein is Dihydroorotase of Geobacter metallireducens (strain ATCC 53774 / DSM 7210 / GS-15).